The sequence spans 299 residues: GTPase Era (299 aa).

The 171-residue stretch at 5-175 (RSGFVCFVGR…TDVLAGKLPP (171 aa)) folds into the Era-type G domain. Residues 13-20 (GRPNTGKS) form a G1 region. 13–20 (GRPNTGKS) lines the GTP pocket. The segment at 39–43 (QTTRH) is G2. Residues 60-63 (DTPG) form a G3 region. GTP is bound by residues 60-64 (DTPGL) and 124-127 (TKID). A G4 region spans residues 124–127 (TKID). Residues 154-156 (VSA) form a G5 region. Positions 206–285 (VRDELPHSLA…YLDLRVKIAK (80 aa)) constitute a KH type-2 domain.

The protein belongs to the TRAFAC class TrmE-Era-EngA-EngB-Septin-like GTPase superfamily. Era GTPase family. In terms of assembly, monomer.

It localises to the cell envelope. Its subcellular location is the secreted. The protein localises to the cell wall. Exhibits GTPase activity. Binds RNA but is probably not involved in ribosome assembly in mycobacteria. The chain is GTPase Era from Mycobacterium sp. (strain KMS).